A 336-amino-acid chain; its full sequence is UPF0324 membrane protein lp_2841 (336 aa).

A run of 9 helical transmembrane segments spans residues 5-22 (GILPGLVTSLVIAIISQG), 26-48 (FVPALGAATIAILLGIIGGNTFL), 84-106 (IGGFGVLFILCQMTITIVGALWL), 116-138 (VRMLMAGGNAVCGSSAIASIAPV), 150-172 (ITLVNLMGTVLMLTLPVLGMAVF), 204-226 (TVQFATIFKIMRIMMLVVVVLIF), 255-277 (WYVAGFLILCALNSLISLPAIIG), 282-304 (TISSWFEIIALAAIGLRLNLVNF), and 311-333 (LALYGLGVGTIQVVSALILITLL).

This sequence belongs to the UPF0324 family.

The protein resides in the cell membrane. This is UPF0324 membrane protein lp_2841 from Lactiplantibacillus plantarum (strain ATCC BAA-793 / NCIMB 8826 / WCFS1) (Lactobacillus plantarum).